Here is a 410-residue protein sequence, read N- to C-terminus: Chloride intracellular channel protein 5 (410 aa).

Residues 191-194 (CPFS) carry the G-site motif. The chain crosses the membrane as a helical span at residues 193 to 213 (FSQRLFMILWLKGVVFNVTTV). Residues 260 to 400 (YPKLAAKHRE…AADSEIELAY (141 aa)) enclose the GST C-terminal domain.

Belongs to the chloride channel CLIC family. Component of a multimeric complex consisting of several cytoskeletal proteins, including actin, ezrin, alpha-actinin, gelsolin, and IQGAP1. Interacts with AKAP9. Interacts with TPRN. TPRN, CLIC5 and PTPQR form concentric rings at the base of stereocilia and may form a complex. Interacts with EZR, MYO6 and RDX; the proteins may work together as a complex to stabilize linkages between the plasma membrane and subjacent actin cytoskeleton at the stereocilium base. Widely expressed in both fetal and adult human tissues. Isoform 1 is expressed in renal glomeruli endothelial cells and podocytes (at protein level).

It localises to the cytoplasm. The protein localises to the cytoskeleton. Its subcellular location is the cell cortex. It is found in the membrane. The protein resides in the apical cell membrane. It localises to the mitochondrion. The protein localises to the cell projection. Its subcellular location is the stereocilium. It is found in the golgi apparatus. The protein resides in the microtubule organizing center. It localises to the centrosome. The catalysed reaction is chloride(in) = chloride(out). It catalyses the reaction Na(+)(in) = Na(+)(out). It carries out the reaction K(+)(in) = K(+)(out). Its activity is regulated as follows. Inhibited by F-actin. Its function is as follows. In the soluble state, catalyzes glutaredoxin-like thiol disulfide exchange reactions with reduced glutathione as electron donor. Can insert into membranes and form non-selective ion channels almost equally permeable to Na(+), K(+) and Cl(-). Required for normal hearing. It is necessary for the formation of stereocilia in the inner ear and normal development of the organ of Corti. May play a role in the regulation of transepithelial ion absorption and secretion. Is required for the development and/or maintenance of the proper glomerular endothelial cell and podocyte architecture. Plays a role in formation of the lens suture in the eye, which is important for normal optical properties of the lens. In Homo sapiens (Human), this protein is Chloride intracellular channel protein 5.